Reading from the N-terminus, the 356-residue chain is UDP-N-acetylglucosamine--N-acetylmuramyl-(pentapeptide) pyrophosphoryl-undecaprenol N-acetylglucosamine transferase (356 aa).

2 residues coordinate UDP-N-acetyl-alpha-D-glucosamine: Ser198 and Gln289.

This sequence belongs to the glycosyltransferase 28 family. MurG subfamily.

It is found in the cell membrane. It carries out the reaction Mur2Ac(oyl-L-Ala-gamma-D-Glu-L-Lys-D-Ala-D-Ala)-di-trans,octa-cis-undecaprenyl diphosphate + UDP-N-acetyl-alpha-D-glucosamine = beta-D-GlcNAc-(1-&gt;4)-Mur2Ac(oyl-L-Ala-gamma-D-Glu-L-Lys-D-Ala-D-Ala)-di-trans,octa-cis-undecaprenyl diphosphate + UDP + H(+). The protein operates within cell wall biogenesis; peptidoglycan biosynthesis. Functionally, cell wall formation. Catalyzes the transfer of a GlcNAc subunit on undecaprenyl-pyrophosphoryl-MurNAc-pentapeptide (lipid intermediate I) to form undecaprenyl-pyrophosphoryl-MurNAc-(pentapeptide)GlcNAc (lipid intermediate II). The sequence is that of UDP-N-acetylglucosamine--N-acetylmuramyl-(pentapeptide) pyrophosphoryl-undecaprenol N-acetylglucosamine transferase from Streptococcus thermophilus (strain ATCC BAA-491 / LMD-9).